The following is a 469-amino-acid chain: SWI/SNF complex subunit SWI3B (469 aa).

The interval 1–42 is disordered; the sequence is MAMKAPDPGGSGEILPSTPSLSETTSGGAAAASKSAQLPSSS. Positions 15-42 are enriched in low complexity; it reads LPSTPSLSETTSGGAAAASKSAQLPSSS. Residues 48-145 enclose the SWIRM domain; it reads IHVPSYSSWF…YNSSASAKPL (98 aa). One can recognise an SANT domain in the interval 223 to 274; it reads ESKPEWSDKEILLLLEAVMHYGDDWKKVASHVIGRTEKDCVSQFVKLPFGEQ. 2 stretches are compositionally biased toward basic and acidic residues: residues 293–306 and 360–369; these read DSDI…DKDG and DKNASRDPNR. Disordered regions lie at residues 293–314 and 360–387; these read DSDI…KRIK and DKNA…ESER. The span at 370–380 shows a compositional bias: polar residues; the sequence is QDANAASSGET. Positions 423-447 form a coiled coil; sequence VHFEKLDLEMERSRKQLEEVRNLLF.

In terms of assembly, homodimers and heterodimers. Interacts with SWI3A, SWI3C, SWI3D, BSH, BRM and FCA (via C-terminus), and (via N-terminus) with HAB1. Interacts with MORC6 and SUVH9. As to expression, expressed in roots, stems, leaves, flowers and siliques.

It localises to the nucleus. Component of a multiprotein complex equivalent of the SWI/SNF complex, an ATP-dependent chromatin-remodeling complex, which is required for the positive and negative regulation of gene expression of a large number of genes. It changes chromatin structure by altering DNA-histone contacts within a nucleosome, leading eventually to a change in nucleosome position, thus facilitating or repressing binding of gene-specific transcription factors. May play an essential role in the transition from the vegetative to the reproductive phase of development. May be a positive regulator of ABA signaling. The polypeptide is SWI/SNF complex subunit SWI3B (SWI3B) (Arabidopsis thaliana (Mouse-ear cress)).